Reading from the N-terminus, the 185-residue chain is dTDP-4-dehydrorhamnose 3,5-epimerase (185 aa).

Residues R23, E28, 47–49 (QDN), and R59 each bind substrate. H62 (proton acceptor) is an active-site residue. 2 residues coordinate substrate: K72 and H119. Y132 functions as the Proton donor in the catalytic mechanism. Residues D143 and K168 each contribute to the substrate site.

It belongs to the dTDP-4-dehydrorhamnose 3,5-epimerase family. In terms of assembly, homodimer.

The enzyme catalyses dTDP-4-dehydro-6-deoxy-alpha-D-glucose = dTDP-4-dehydro-beta-L-rhamnose. Its pathway is carbohydrate biosynthesis; dTDP-L-rhamnose biosynthesis. The protein operates within bacterial outer membrane biogenesis; LPS O-antigen biosynthesis. Its function is as follows. Catalyzes the epimerization of the C3' and C5'positions of dTDP-6-deoxy-D-xylo-4-hexulose, forming dTDP-6-deoxy-L-lyxo-4-hexulose. The chain is dTDP-4-dehydrorhamnose 3,5-epimerase (rfbC) from Escherichia coli (strain K12).